The chain runs to 1062 residues: Isoleucine--tRNA ligase (1062 aa).

The short motif at 47–57 (PYTTGHIHLGT) is the 'HIGH' region element. The short motif at 591-595 (KMSKS) is the 'KMSKS' region element. Position 594 (Lys-594) interacts with ATP.

It belongs to the class-I aminoacyl-tRNA synthetase family. IleS type 2 subfamily. In terms of assembly, monomer. Zn(2+) is required as a cofactor.

Its subcellular location is the cytoplasm. The catalysed reaction is tRNA(Ile) + L-isoleucine + ATP = L-isoleucyl-tRNA(Ile) + AMP + diphosphate. Its function is as follows. Catalyzes the attachment of isoleucine to tRNA(Ile). As IleRS can inadvertently accommodate and process structurally similar amino acids such as valine, to avoid such errors it has two additional distinct tRNA(Ile)-dependent editing activities. One activity is designated as 'pretransfer' editing and involves the hydrolysis of activated Val-AMP. The other activity is designated 'posttransfer' editing and involves deacylation of mischarged Val-tRNA(Ile). This is Isoleucine--tRNA ligase from Methanospirillum hungatei JF-1 (strain ATCC 27890 / DSM 864 / NBRC 100397 / JF-1).